Consider the following 30-residue polypeptide: Chassatide C9 (30 aa).

The cyclopeptide (Gly-Asn) cross-link spans 1–30 (GIPCGESCVFIPCVTTVIGCSCKDKVCYNN). Intrachain disulfides connect Cys4/Cys20, Cys8/Cys22, and Cys13/Cys27.

In terms of processing, this is a cyclic peptide.

Probably participates in a plant defense mechanism. This is Chassatide C9 from Chassalia chartacea (Chassalia curviflora).